The following is a 396-amino-acid chain: Ornithine aminotransferase 2 (396 aa).

An N6-(pyridoxal phosphate)lysine modification is found at K255.

The protein belongs to the class-III pyridoxal-phosphate-dependent aminotransferase family. OAT subfamily. Requires pyridoxal 5'-phosphate as cofactor.

Its subcellular location is the cytoplasm. It catalyses the reaction a 2-oxocarboxylate + L-ornithine = L-glutamate 5-semialdehyde + an L-alpha-amino acid. Its pathway is amino-acid biosynthesis; L-proline biosynthesis; L-glutamate 5-semialdehyde from L-ornithine: step 1/1. Its function is as follows. Catalyzes the interconversion of ornithine to glutamate semialdehyde. In Staphylococcus aureus (strain MRSA252), this protein is Ornithine aminotransferase 2.